Here is a 149-residue protein sequence, read N- to C-terminus: METLYRVPFLVLECPNLKLKKPPWLHMPSAMTVYALVVVSYFLITGGIIYDVIVEPPSVGSMTDEHGHQRPVAFLAYRVNGQYIMEGLASSFLFTMGGLGFIILDRSNAPNIPKLNRFLLLFIGFVCVLLSFFMARVFMRMKLPGYLMG.

Over 1–32 the chain is Cytoplasmic; sequence METLYRVPFLVLECPNLKLKKPPWLHMPSAMT. Residues 33 to 53 traverse the membrane as a helical segment; sequence VYALVVVSYFLITGGIIYDVI. The Extracellular portion of the chain corresponds to 54–83; it reads VEPPSVGSMTDEHGHQRPVAFLAYRVNGQY. Residues 84-104 form a helical membrane-spanning segment; the sequence is IMEGLASSFLFTMGGLGFIIL. At 105–117 the chain is on the cytoplasmic side; the sequence is DRSNAPNIPKLNR. A helical transmembrane segment spans residues 118–138; sequence FLLLFIGFVCVLLSFFMARVF. At 139 to 149 the chain is on the extracellular side; it reads MRMKLPGYLMG.

The protein belongs to the OSTC family. Component of STT3A-containing oligosaccharyl transferase (OST-A) complex. STT3A-containing complex assembly occurs through the formation of 3 subcomplexes. Subcomplex 1 contains RPN1 and TMEM258, subcomplex 2 contains the STT3A-specific subunits STT3A, DC2/OSTC, and KCP2 as well as the core subunit OST4, and subcomplex 3 contains RPN2, DAD1, and OST48. The OST-A complex can form stable complexes with the Sec61 complex or with both the Sec61 and TRAP complexes. Interacts with PSEN1 and NCSTN; indicative for an association with the gamma-secretase complex.

The protein localises to the endoplasmic reticulum. The protein resides in the membrane. It functions in the pathway protein modification; protein glycosylation. Functionally, subunit of STT3A-containing oligosaccharyl transferase (OST-A) complex that catalyzes the initial transfer of a defined glycan (Glc(3)Man(9)GlcNAc(2) in eukaryotes) from the lipid carrier dolichol-pyrophosphate to an asparagine residue within an Asn-X-Ser/Thr consensus motif in nascent polypeptide chains, the first step in protein N-glycosylation. N-glycosylation occurs cotranslationally and the complex associates with the Sec61 complex at the channel-forming translocon complex that mediates protein translocation across the endoplasmic reticulum (ER). Within the OST-A complex, acts as an adapter that anchors the OST-A complex to the Sec61 complex. May be involved in N-glycosylation of APP (amyloid-beta precursor protein). Can modulate gamma-secretase cleavage of APP by enhancing endoprotelysis of PSEN1. The protein is Oligosaccharyltransferase complex subunit OSTC of Homo sapiens (Human).